The chain runs to 279 residues: uncharacterized protein (279 aa).

Low complexity predominate over residues 1-29 (MSSRYTSSYTPSSRYGSGWDYSSSYSSSR). Disordered stretches follow at residues 1-111 (MSSR…APRE) and 137-233 (LTLA…AEAL). Residues 30–44 (TSRDRDTGSYRDRDY) are compositionally biased toward basic and acidic residues. Residues 45–59 (SSTSYTSTRPRYSTY) show a composition bias toward low complexity. Positions 142 to 153 (EPEESEEEEDDE) are enriched in acidic residues. Residues 170–186 (ESSPVSSPVKEVSSAAS) are compositionally biased toward low complexity. Over residues 189-205 (ANDNGNETENRTPSPTV) the composition is skewed to polar residues. Residues 221-233 (SDVKKEGGDAEAL) are compositionally biased toward basic and acidic residues.

This is an uncharacterized protein from Caenorhabditis elegans.